The following is a 504-amino-acid chain: MSSDNLDISMEKKYSADVDVEKAPTPEYGEVETAPLSQSSWIYRRPRIGRFKSLAYGSALTQTIIVSWVCFLCPGMFNALSGLGGGGEVNADVANDANVALYSTFAGLGFFAGSICNLIGVKLTLAIGGTGYSVYTASLLCYKHVYNRGFVIFGGCYLGLTAGMLWAAQGAVIMSYPREENKARYIAIFWGIFNLGAVIGSIVPLAQTMHSSVNSVGDGTYAGFIVLMAVGSALALFMVSPEKTVKEDGKFVHIEKSMGWKKELLGLVQTLYKEYWVLLLFPMFFSSNWFTTYQFNDFNLAYFNIRTRSLNNLLYWFAQIMGSAVAALFLDWQRFNRVIRARVGWGLVFVLICVIWGGGLAFQLKYTRKSVAESDFVVTDFTHRGYTGYAFLYIFYGMLDAIFQSYAYWIIGSLSNDTNKLAVYMGFYKSLQSAGAAITYRMDTLNIPYMNYFASCWALLCGSLIVASPVIWKKIKLTTEGIEDEIPPLANGLAVDGPVVPLKE.

A run of 11 helical transmembrane segments spans residues 64-84 (IIVS…SGLG), 97-116 (ANVA…GSIC), 123-145 (LTLA…YKHV), 149-169 (GFVI…WAAQ), 186-206 (IAIF…VPLA), 219-239 (GTYA…LFMV), 275-293 (YWVL…FTTY), 310-330 (LNNL…ALFL), 343-363 (VGWG…LAFQ), 391-411 (FLYI…YWII), and 452-472 (YFAS…PVIW).

It belongs to the unc-93 family.

It localises to the cytoplasm. It is found in the membrane. The sequence is that of UNC93-like protein C922.05c from Schizosaccharomyces pombe (strain 972 / ATCC 24843) (Fission yeast).